An 831-amino-acid polypeptide reads, in one-letter code: Probable beta-glucosidase H (831 aa).

The N-linked (GlcNAc...) asparagine glycan is linked to asparagine 13. The active site involves aspartate 225. One can recognise a PA14 domain in the interval arginine 389–valine 549. N-linked (GlcNAc...) asparagine glycosylation is found at asparagine 474, asparagine 514, asparagine 604, asparagine 629, asparagine 726, and asparagine 823.

The protein belongs to the glycosyl hydrolase 3 family.

It is found in the secreted. It carries out the reaction Hydrolysis of terminal, non-reducing beta-D-glucosyl residues with release of beta-D-glucose.. Its pathway is glycan metabolism; cellulose degradation. In terms of biological role, beta-glucosidases are one of a number of cellulolytic enzymes involved in the degradation of cellulosic biomass. Catalyzes the last step releasing glucose from the inhibitory cellobiose. The chain is Probable beta-glucosidase H (bglH) from Emericella nidulans (strain FGSC A4 / ATCC 38163 / CBS 112.46 / NRRL 194 / M139) (Aspergillus nidulans).